Reading from the N-terminus, the 570-residue chain is MTEPIISFKDFSFQYHSQATPTLQNINVDIYPGEKVLVVGASGSGKSTFANCINGLIPFKTKGNITGELYINNQDATVSCLHDRSNVVGTVLQDTDGQFIGLTAAEDMAFLLENNCVEQDDMKKNVSYWAEKVGMIEHLNHRPQDLSGGQKQRVSLGGILIHRTPILILDEPLANLDPATGHETLRLLNNIHEETKSTMIIVEHRLEESLDDTFDRVLLFKDGKIIANTTPSDLLKSSKLKEAGIREPLYCTALKYAEVDVESIDNLANLRDVCMSEHVKFKVKKWIDETSANNDNKYKSEPLLELNEVCVQYSDYSNSVLNNVQLNVYRREMLSIVGHNGAGKSTLAKAICGFLDITGNIQFCNRGFNQLSISERSEFVGYVMQNPNHMISEKMIYDEVALGLRARGMKESDIKIRVENVLKICGLYAFRNWPIAALSYGQKKRVTIASVLVLNPEIIILDEPTAGQDFYHYNEIMSFLIELNRQGKTIIMITHDMHLLSEYSSRTVVLSKGQVVADTTPVLILNDKKICEIASLRQTSLFEMAEYIGISEPQKLVQLFINHDRKVRRQ.

ABC transporter domains lie at 6-247 and 304-537; these read ISFK…GIRE and LELN…ASLR. Residues 40–47 and 338–345 contribute to the ATP site; these read GASGSGKS and GHNGAGKS.

The protein belongs to the ABC transporter superfamily.

It is found in the cell membrane. Probably part of an ABC transporter complex. Responsible for energy coupling to the transport system. This Staphylococcus aureus (strain Mu50 / ATCC 700699) protein is Putative ABC transporter ATP-binding protein SAV2684.